The following is a 458-amino-acid chain: UDP-N-acetylmuramoylalanine--D-glutamate ligase (458 aa).

Position 124–130 (Gly-124–Thr-130) interacts with ATP.

The protein belongs to the MurCDEF family.

Its subcellular location is the cytoplasm. It catalyses the reaction UDP-N-acetyl-alpha-D-muramoyl-L-alanine + D-glutamate + ATP = UDP-N-acetyl-alpha-D-muramoyl-L-alanyl-D-glutamate + ADP + phosphate + H(+). It participates in cell wall biogenesis; peptidoglycan biosynthesis. Its function is as follows. Cell wall formation. Catalyzes the addition of glutamate to the nucleotide precursor UDP-N-acetylmuramoyl-L-alanine (UMA). The protein is UDP-N-acetylmuramoylalanine--D-glutamate ligase of Clostridium novyi (strain NT).